The sequence spans 125 residues: Small ribosomal subunit protein bS6 (125 aa).

The protein belongs to the bacterial ribosomal protein bS6 family.

Functionally, binds together with bS18 to 16S ribosomal RNA. The chain is Small ribosomal subunit protein bS6 (rpsF) from Pasteurella multocida (strain Pm70).